The following is a 523-amino-acid chain: Nuclear receptor ROR-alpha (523 aa).

A compositionally biased stretch (low complexity) spans 1 to 26 (MESAPAAPDPAASEPGSSGADAAAGS). The interval 1–63 (MESAPAAPDP…SRGISVTKKT (63 aa)) is disordered. Lysine 38 carries the post-translational modification N6-methyllysine. Polar residues predominate over residues 48 to 57 (QSYSSTSRGI). NR C4-type zinc fingers lie at residues 73-93 (CKIC…CEGC) and 109-133 (CPRQ…LQKC). A DNA-binding region (nuclear receptor) is located at residues 73–138 (CKICGDKSSG…RLQKCLAVGM (66 aa)). Residues 154 to 183 (DSLYAEVQKHRMQQQQRDHQQQPGEAEPLT) form a disordered region. Threonine 183 carries the post-translational modification Phosphothreonine; by MAPK1. Lysine 240 participates in a covalent cross-link: Glycyl lysine isopeptide (Lys-Gly) (interchain with G-Cter in SUMO). The NR LBD domain maps to 272-510 (ELEHLAQNIS…LHFPPLYKEL (239 aa)). The AF-2 signature appears at 506–523 (LYKELFTSEFEPAMQIDG).

It belongs to the nuclear hormone receptor family. NR1 subfamily. In terms of assembly, monomer. Interacts (via the DNA-binding domain) with HIF1A; the interaction enhances HIF1A transcription under hypoxia through increasing protein stability. Interacts with CEBPB; the interaction disrupts the interaction CEBPB:EP300. Interacts with the coactivators NCOA2, PPARGC1A (via LXXLL motif), EP300 and MED1. Interacts with the corepressor NCOR1. Interacts with MAGED1 and CTNNB1. Interacts with CRY1 and PER2. Interacts (via AF-2 motif) with PROX1. Interacts with NRIP1. Isoform 4 interacts (via AF-2 motif) with isoform 1 of FOXP3 (via LXXLL motif). In terms of processing, phosphorylation by conventional PKCs in neurons inhibits transcriptional activity. Phosphorylated on Thr-183 by MAPK1/ERK1 in vitro. Post-translationally, sumoylated by SENP1 and SENP2. Sumoylation, promoted by PIAS2, PIAS3, PIAS4 but not PIAS1, enhances the transcriptional activity. Desumoylated by SENP1. Ubiquitinated, leading to its degradation by the proteasome. Proteasomal degradation is required for efficient transcriptional activity and is prevented by HR. In terms of processing, monomethylated at Lys-38 by EZH2, this creates a degron recognized by a DCX (DDB1-DCAF1/VPRBP-CUL4A-RBX1) E3 ubiquitin ligase complex. Widely expressed in a number of tissues. Expressed in both regulatory T-cells (Treg) and effector T-cells (Teff). Isoform 4: Highly expressed in the central nervous system, including in the cerebellum.

Its subcellular location is the nucleus. Functionally, nuclear receptor that binds DNA as a monomer to ROR response elements (RORE) containing a single core motif half-site 5'-AGGTCA-3' preceded by a short A-T-rich sequence. Key regulator of embryonic development, cellular differentiation, immunity, circadian rhythm as well as lipid, steroid, xenobiotics and glucose metabolism. Considered to have intrinsic transcriptional activity, have some natural ligands like oxysterols that act as agonists (25-hydroxycholesterol) or inverse agonists (7-oxygenated sterols), enhancing or repressing the transcriptional activity, respectively. Recruits distinct combinations of cofactors to target genes regulatory regions to modulate their transcriptional expression, depending on the tissue, time and promoter contexts. Regulates genes involved in photoreceptor development including OPN1SW, OPN1SM and ARR3 and skeletal muscle development with MYOD1. Required for proper cerebellum development. Regulates SHH gene expression, among others, to induce granule cells proliferation as well as expression of genes involved in calcium-mediated signal transduction. Regulates the circadian expression of several clock genes, including CLOCK, BMAL1, NPAS2 and CRY1. Competes with NR1D1 for binding to their shared DNA response element on some clock genes such as BMAL1, CRY1 and NR1D1 itself, resulting in NR1D1-mediated repression or RORA-mediated activation of clock genes expression, leading to the circadian pattern of clock genes expression. Therefore influences the period length and stability of the clock. Regulates genes involved in lipid metabolism such as apolipoproteins APOA1, APOA5, APOC3 and PPARG. In liver, has specific and redundant functions with RORC as positive or negative modulator of expression of genes encoding phase I and phase II proteins involved in the metabolism of lipids, steroids and xenobiotics, such as CYP7B1 and SULT2A1. Induces a rhythmic expression of some of these genes. In addition, interplays functionally with NR1H2 and NR1H3 for the regulation of genes involved in cholesterol metabolism. Also involved in the regulation of hepatic glucose metabolism through the modulation of G6PC1 and PCK1. In adipose tissue, plays a role as negative regulator of adipocyte differentiation, probably acting through dual mechanisms. May suppress CEBPB-dependent adipogenesis through direct interaction and PPARG-dependent adipogenesis through competition for DNA-binding. Downstream of IL6 and TGFB and synergistically with RORC isoform 2, is implicated in the lineage specification of uncommitted CD4(+) T-helper (T(H)) cells into T(H)17 cells, antagonizing the T(H)1 program. Probably regulates IL17 and IL17F expression on T(H) by binding to the essential enhancer conserved non-coding sequence 2 (CNS2) in the IL17-IL17F locus. Involved in hypoxia signaling by interacting with and activating the transcriptional activity of HIF1A. May inhibit cell growth in response to cellular stress. May exert an anti-inflammatory role by inducing CHUK expression and inhibiting NF-kappa-B signaling. The protein is Nuclear receptor ROR-alpha (RORA) of Homo sapiens (Human).